The chain runs to 469 residues: Sulfate adenylyltransferase subunit 1 (469 aa).

The tr-type G domain maps to 22-238; sequence KQLLRFITCG…LETIKIDEDR (217 aa). Residues 31 to 38 are G1; the sequence is GSVDDGKS. 31–38 contributes to the GTP binding site; sequence GSVDDGKS. A G2 region spans residues 89-93; that stretch reads GITID. A G3 region spans residues 110–113; it reads DTPG. GTP-binding positions include 110 to 114 and 165 to 168; these read DTPGH and NKMD. Positions 165-168 are G4; that stretch reads NKMD. Positions 203–205 are G5; it reads SAL.

It belongs to the TRAFAC class translation factor GTPase superfamily. Classic translation factor GTPase family. CysN/NodQ subfamily. As to quaternary structure, heterodimer composed of CysD, the smaller subunit, and CysN.

The catalysed reaction is sulfate + ATP + H(+) = adenosine 5'-phosphosulfate + diphosphate. It participates in sulfur metabolism; hydrogen sulfide biosynthesis; sulfite from sulfate: step 1/3. In terms of biological role, with CysD forms the ATP sulfurylase (ATPS) that catalyzes the adenylation of sulfate producing adenosine 5'-phosphosulfate (APS) and diphosphate, the first enzymatic step in sulfur assimilation pathway. APS synthesis involves the formation of a high-energy phosphoric-sulfuric acid anhydride bond driven by GTP hydrolysis by CysN coupled to ATP hydrolysis by CysD. The chain is Sulfate adenylyltransferase subunit 1 from Aliarcobacter butzleri (strain RM4018) (Arcobacter butzleri).